A 765-amino-acid chain; its full sequence is Phosphoribosylformylglycinamidine synthase subunit PurL (765 aa).

H57 is a catalytic residue. Positions 60 and 104 each coordinate ATP. E106 contacts Mg(2+). Residues S107 to H110 and R129 each bind substrate. Catalysis depends on H108, which acts as the Proton acceptor. D130 contributes to the Mg(2+) binding site. Q254 serves as a coordination point for substrate. Mg(2+) is bound at residue D282. E326–Q328 is a substrate binding site. ATP is bound by residues N508 and G545. N546 contacts Mg(2+). S548 serves as a coordination point for substrate.

It belongs to the FGAMS family. In terms of assembly, monomer. Part of the FGAM synthase complex composed of 1 PurL, 1 PurQ and 2 PurS subunits.

It is found in the cytoplasm. It carries out the reaction N(2)-formyl-N(1)-(5-phospho-beta-D-ribosyl)glycinamide + L-glutamine + ATP + H2O = 2-formamido-N(1)-(5-O-phospho-beta-D-ribosyl)acetamidine + L-glutamate + ADP + phosphate + H(+). Its pathway is purine metabolism; IMP biosynthesis via de novo pathway; 5-amino-1-(5-phospho-D-ribosyl)imidazole from N(2)-formyl-N(1)-(5-phospho-D-ribosyl)glycinamide: step 1/2. Its function is as follows. Part of the phosphoribosylformylglycinamidine synthase complex involved in the purines biosynthetic pathway. Catalyzes the ATP-dependent conversion of formylglycinamide ribonucleotide (FGAR) and glutamine to yield formylglycinamidine ribonucleotide (FGAM) and glutamate. The FGAM synthase complex is composed of three subunits. PurQ produces an ammonia molecule by converting glutamine to glutamate. PurL transfers the ammonia molecule to FGAR to form FGAM in an ATP-dependent manner. PurS interacts with PurQ and PurL and is thought to assist in the transfer of the ammonia molecule from PurQ to PurL. In Corynebacterium aurimucosum (strain ATCC 700975 / DSM 44827 / CIP 107346 / CN-1) (Corynebacterium nigricans), this protein is Phosphoribosylformylglycinamidine synthase subunit PurL.